Reading from the N-terminus, the 132-residue chain is MGFLGKKVNGSAPARTTRAAGQAGEDRALAHLTAAGLALVERNYRTPGRGGGEIDLILRERDGTLVFVEVRSRGASAYGGAGGSIGVAKQRRIVFAAQHYLLRWPAPPPCRFDAVLIEGDRLQWLRGAFDAA.

Residues 1-23 (MGFLGKKVNGSAPARTTRAAGQA) are disordered.

It belongs to the UPF0102 family.

The protein is UPF0102 protein Ajs_0414 of Acidovorax sp. (strain JS42).